Here is a 328-residue protein sequence, read N- to C-terminus: Aspartate carbamoyltransferase catalytic subunit (328 aa).

2 residues coordinate carbamoyl phosphate: Arg64 and Thr65. Lys92 is an L-aspartate binding site. Positions 114, 144, and 147 each coordinate carbamoyl phosphate. 2 residues coordinate L-aspartate: Arg177 and Arg232. Residues Gly273 and Pro274 each coordinate carbamoyl phosphate.

This sequence belongs to the aspartate/ornithine carbamoyltransferase superfamily. ATCase family. As to quaternary structure, heterododecamer (2C3:3R2) of six catalytic PyrB chains organized as two trimers (C3), and six regulatory PyrI chains organized as three dimers (R2).

It catalyses the reaction carbamoyl phosphate + L-aspartate = N-carbamoyl-L-aspartate + phosphate + H(+). It participates in pyrimidine metabolism; UMP biosynthesis via de novo pathway; (S)-dihydroorotate from bicarbonate: step 2/3. Functionally, catalyzes the condensation of carbamoyl phosphate and aspartate to form carbamoyl aspartate and inorganic phosphate, the committed step in the de novo pyrimidine nucleotide biosynthesis pathway. This chain is Aspartate carbamoyltransferase catalytic subunit, found in Halorhodospira halophila (strain DSM 244 / SL1) (Ectothiorhodospira halophila (strain DSM 244 / SL1)).